The chain runs to 178 residues: Pyruvate synthase subunit PorC (178 aa).

In terms of assembly, heterotetramer of one alpha, one beta, one delta and one gamma chain.

It catalyses the reaction 2 oxidized [2Fe-2S]-[ferredoxin] + pyruvate + CoA = 2 reduced [2Fe-2S]-[ferredoxin] + acetyl-CoA + CO2 + H(+). The protein is Pyruvate synthase subunit PorC (porC) of Methanocaldococcus jannaschii (strain ATCC 43067 / DSM 2661 / JAL-1 / JCM 10045 / NBRC 100440) (Methanococcus jannaschii).